Reading from the N-terminus, the 154-residue chain is Aspartate carbamoyltransferase regulatory chain (154 aa).

Positions 109, 114, 138, and 141 each coordinate Zn(2+).

The protein belongs to the PyrI family. Contains catalytic and regulatory chains. Zn(2+) is required as a cofactor.

Its function is as follows. Involved in allosteric regulation of aspartate carbamoyltransferase. The polypeptide is Aspartate carbamoyltransferase regulatory chain (Pectobacterium carotovorum subsp. carotovorum (strain PC1)).